Here is a 517-residue protein sequence, read N- to C-terminus: MPFNGEKQYVNEDQQSDSESSRFSESTASLSDYGCSRQSFTSDSSSKSSSPASTSPPRGIMFDDVMAAAKNLSDMTLAHEIAVNENFQLRPNALPENSLAGQVKRVVHQAFWDVLEADLSAEPPQYEYAIKLFEEIREILLSFLTPGGNRLHSQICEVLDIDLIRQQAEHSAVDIQGLANYVISTMGKICAPVRDEDIRELKATTNIVEMLRQIFRVLDLMRMDMTNFVIRNIRPHIQHHLVEYERNKFQEVLEETPNALSQTTEWLKESIDKELFSETDVAPGAEHSSTPSLSPLTVLNNCYLKLLQWDYQKNVLPETLMTDGPRLQELTEKLNQLKMIACVSLITNNMVGAVTEGLPELANRLKRISAVLLEGMSKQTFNLKEALNSIGVQTCAEVNKALKERGSPTLNAEVQANLVGQFTSLEEKDNPVCALMDKRIQLYMKSLLCLPSTQKSRPPVPGGLDVIQQELEVLGCQYANIVNLNKQVYGPFYANIFRKLLFRDEAMGKIDASLPTN.

Positions 1-59 are disordered; that stretch reads MPFNGEKQYVNEDQQSDSESSRFSESTASLSDYGCSRQSFTSDSSSKSSSPASTSPPRG. Serine 16 carries the post-translational modification Phosphoserine. Positions 17 to 55 are enriched in low complexity; sequence DSESSRFSESTASLSDYGCSRQSFTSDSSSKSSSPASTS.

This sequence belongs to the TCP11 family. As to quaternary structure, interacts with FMNL2; this interaction promotes muscle-derived satellite cell (MDSC) migration and differentiation.

Its subcellular location is the cytoplasm. It localises to the cytoskeleton. Promotes the migration of muscle-derived satellite cells (MDSCs) during differentiation throught interaction with FMNL2 and therefore may participate in microfilament assembly. This is T-complex protein 11-like protein 2 from Rattus norvegicus (Rat).